Reading from the N-terminus, the 51-residue chain is Otoconin-90 (51 aa).

The protein belongs to the phospholipase A2 family. Interacts with OTOL1.

The protein resides in the secreted. In terms of biological role, major protein of the otoconia, a calcium carbonate structure in the saccule and utricle of the ear. Together with OTOL1, acts as a scaffold for otoconia biomineralization: sequesters calcium and forms interconnecting fibrils between otoconia that are incorporated into the calcium crystal structure. Together with OTOL1, modulates calcite crystal morphology and growth kinetics. It is unlikely that this protein has phospholipase A2 activity. The chain is Otoconin-90 (OC90) from Cavia porcellus (Guinea pig).